We begin with the raw amino-acid sequence, 625 residues long: tRNA uridine 5-carboxymethylaminomethyl modification enzyme MnmG (625 aa).

13–18 (GGGHAG) contacts FAD. 273–287 (GPRYCPSIEDKVVRF) provides a ligand contact to NAD(+).

It belongs to the MnmG family. Homodimer. Heterotetramer of two MnmE and two MnmG subunits. Requires FAD as cofactor.

It localises to the cytoplasm. In terms of biological role, NAD-binding protein involved in the addition of a carboxymethylaminomethyl (cmnm) group at the wobble position (U34) of certain tRNAs, forming tRNA-cmnm(5)s(2)U34. This Methylococcus capsulatus (strain ATCC 33009 / NCIMB 11132 / Bath) protein is tRNA uridine 5-carboxymethylaminomethyl modification enzyme MnmG.